We begin with the raw amino-acid sequence, 102 residues long: MNKSGFLIFCLILLTLSQGVPLSRNTRCSCIEISNGSVNPRSLEKLEVIPASQSCPRVEIIATMKKNGEKRCLNPESKTIKNLLKAINKQRTKRSPRTRKEA.

Residues 1–19 (MNKSGFLIFCLILLTLSQG) form the signal peptide. Citrulline is present on Arg-24. 2 disulfide bridges follow: Cys-28/Cys-55 and Cys-30/Cys-72.

This sequence belongs to the intercrine alpha (chemokine CxC) family. In terms of assembly, monomer, dimer, and tetramer. Interacts with CXCR3 (via N-terminus).

Its subcellular location is the secreted. Pro-inflammatory cytokine that is involved in a wide variety of processes such as chemotaxis, differentiation, and activation of peripheral immune cells, regulation of cell growth, apoptosis and modulation of angiostatic effects. Plays thereby an important role during viral infections by stimulating the activation and migration of immune cells to the infected sites. Mechanistically, binding of CXCL10 to the CXCR3 receptor activates G protein-mediated signaling and results in downstream activation of phospholipase C-dependent pathway, an increase in intracellular calcium production and actin reorganization. In turn, recruitment of activated Th1 lymphocytes occurs at sites of inflammation. Activation of the CXCL10/CXCR3 axis also plays an important role in neurons in response to brain injury for activating microglia, the resident macrophage population of the central nervous system, and directing them to the lesion site. This recruitment is an essential element for neuronal reorganization. The polypeptide is C-X-C motif chemokine 10 (CXCL10) (Bos taurus (Bovine)).